We begin with the raw amino-acid sequence, 495 residues long: Transcription termination/antitermination protein NusA (495 aa).

Residues 135 to 200 (GEIITGVVKK…RGAQLFVTRS (66 aa)) enclose the S1 motif domain. A KH domain is found at 302–368 (KHTMDIAVEA…FTKYLDIDED (67 aa)). 2 repeat units span residues 364-414 (DIDE…KNAL) and 439-489 (GVDR…RNIC). The tract at residues 364–489 (DIDEDFATVL…ALIMAARNIC (126 aa)) is 2 X 51 AA approximate repeats.

Belongs to the NusA family. As to quaternary structure, monomer. Binds directly to the core enzyme of the DNA-dependent RNA polymerase and to nascent RNA.

It localises to the cytoplasm. Participates in both transcription termination and antitermination. The chain is Transcription termination/antitermination protein NusA from Shigella flexneri.